The following is a 198-amino-acid chain: Dynein light chain Tctex-type protein 2 (198 aa).

Residues 1 to 34 (MEKRGRGVKSSPIQTPNQTPQQAPVTPRKERRPS) are disordered. The span at 11–24 (SPIQTPNQTPQQAP) shows a compositional bias: polar residues.

Belongs to the dynein light chain Tctex-type family. Interacts with CCDC159. Interacts with CSNK2B. Expressed predominantly in testis. Also expressed in brain, lung and trachea.

It localises to the cytoplasm. It is found in the cytoskeleton. The protein localises to the cytoplasmic granule. Its subcellular location is the membrane. In terms of biological role, may be an accessory component of axonemal dynein and cytoplasmic dynein 1. Candidate for involvement in male sterility. The polypeptide is Dynein light chain Tctex-type protein 2 (Homo sapiens (Human)).